Here is a 206-residue protein sequence, read N- to C-terminus: Protein Nef (206 aa).

G2 is lipidated: N-myristoyl glycine; by host. Phosphoserine; by host is present on S6. Residues 62-65 (EEEK) are acidic; interacts with host PACS1 and PACS2; stabilizes the interaction of NEF/MHC-I with host AP1M1; necessary for MHC-I internalization. An SH3-binding; interaction with Src family tyrosine kinases region spans residues 69 to 78 (PVTPQVPLRP). The PxxP; stabilizes the interaction of NEF/MHC-I with host AP1M1; necessary for MHC-I internalization motif lies at 72-75 (PQVP). The tract at residues 108–124 (DILDLWIYHTQGYFPDW) is mediates dimerization, Nef-PTE1 interaction. Residues 148 to 180 (VEPEKLEEANKGENTSLLHPVSLHGMDDPEREV) are binding to ATP6V1H. The Dileucine internalization motif; necessary for CD4 internalization signature appears at 164–165 (LL). The short motif at 174–175 (DD) is the Diacidic; necessary for CD4 internalization element.

The protein belongs to the lentivirus primate group Nef protein family. Monomer; cytosolic form. Homodimer; membrane bound form. Interacts with Nef associated p21-activated kinase (PAK2); this interaction activates PAK2. Associates with the Nef-MHC-I-AP1 complex; this complex is required for MHC-I internalization. Interacts (via C-terminus) with host PI3-kinase. Interacts with host PACS1; this interaction seems to be weak. Interacts with host PACS2. Interacts with host LCK and MAPK3; these interactions inhibit the kinase activity of the latter. Interacts with host ATP6V1H; this interaction may play a role in CD4 endocytosis. Associates with the CD4-Nef-AP2 complex; this complex is required for CD4 internalization. Interacts with host AP2 subunit alpha and AP2 subunit sigma2. Interacts with TCR-zeta chain; this interaction up-regulates the Fas ligand (FasL) surface expression. Interacts with host HCK, LYN, and SRC; these interactions activate the Src family kinases. Interacts with MAP3K5; this interaction inhibits the Fas and TNFR-mediated death signals. Interacts with beta-COP and PTE1. Interacts with human RACK1; this increases Nef phosphorylation by PKC. Interacts with TP53; this interaction decreases the half-life of TP53, protecting the infected cell against p53-mediated apoptosis. In terms of processing, the virion-associated Nef proteins are cleaved by the viral protease to release the soluble C-terminal core protein. Nef is probably cleaved concomitantly with viral structural proteins on maturation of virus particles. Post-translationally, myristoylated. Phosphorylated on serine residues, probably by host PKCdelta and theta.

The protein resides in the host cell membrane. It is found in the virion. It localises to the secreted. Its subcellular location is the host Golgi apparatus membrane. Functionally, factor of infectivity and pathogenicity, required for optimal virus replication. Alters numerous pathways of T-lymphocyte function and down-regulates immunity surface molecules in order to evade host defense and increase viral infectivity. Alters the functionality of other immunity cells, like dendritic cells, monocytes/macrophages and NK cells. Its function is as follows. In infected CD4(+) T-lymphocytes, down-regulates the surface MHC-I, mature MHC-II, CD4, CD28, CCR5 and CXCR4 molecules. Mediates internalization and degradation of host CD4 through the interaction of with the cytoplasmic tail of CD4, the recruitment of AP-2 (clathrin adapter protein complex 2), internalization through clathrin coated pits, and subsequent transport to endosomes and lysosomes for degradation. Diverts host MHC-I molecules to the trans-Golgi network-associated endosomal compartments by an endocytic pathway to finally target them for degradation. MHC-I down-regulation may involve AP-1 (clathrin adapter protein complex 1) or possibly Src family kinase-ZAP70/Syk-PI3K cascade recruited by PACS2. In consequence infected cells are masked for immune recognition by cytotoxic T-lymphocytes. Decreasing the number of immune receptors also prevents reinfection by more HIV particles (superinfection). Down-regulates host SERINC3 and SERINC5 thereby excluding these proteins from the viral particles. Virion infectivity is drastically higher when SERINC3 or SERINC5 are excluded from the viral envelope, because these host antiviral proteins impair the membrane fusion event necessary for subsequent virion penetration. In terms of biological role, bypasses host T-cell signaling by inducing a transcriptional program nearly identical to that of anti-CD3 cell activation. Interaction with TCR-zeta chain up-regulates the Fas ligand (FasL). Increasing surface FasL molecules and decreasing surface MHC-I molecules on infected CD4(+) cells send attacking cytotoxic CD8+ T-lymphocytes into apoptosis. Plays a role in optimizing the host cell environment for viral replication without causing cell death by apoptosis. Protects the infected cells from apoptosis in order to keep them alive until the next virus generation is ready to strike. Inhibits the Fas and TNFR-mediated death signals by blocking MAP3K5/ASK1. Decreases the half-life of TP53, protecting the infected cell against p53-mediated apoptosis. Inhibits the apoptotic signals regulated by the Bcl-2 family proteins through the formation of a Nef/PI3-kinase/PAK2 complex that leads to activation of PAK2 and induces phosphorylation of host BAD. Functionally, extracellular Nef protein targets CD4(+) T-lymphocytes for apoptosis by interacting with CXCR4 surface receptors. The sequence is that of Protein Nef from Homo sapiens (Human).